Here is a 378-residue protein sequence, read N- to C-terminus: Probable E3 ubiquitin-protein ligase LUL3 (378 aa).

The segment covering methionine 1–histidine 21 has biased composition (basic residues). The interval methionine 1–tyrosine 79 is disordered. A lipid anchor (N-myristoyl glycine) is attached at glycine 2. Pro residues-rich tracts occupy residues aspartate 29–glutamine 38 and serine 55–serine 72. Residues phenylalanine 164 to glutamine 283 are DAR2 domain. The segment at cysteine 321 to arginine 360 adopts an RING-type; atypical zinc-finger fold.

It belongs to the RING-type zinc finger family. LOG2 subfamily. Myristoylated (in vitro).

It catalyses the reaction S-ubiquitinyl-[E2 ubiquitin-conjugating enzyme]-L-cysteine + [acceptor protein]-L-lysine = [E2 ubiquitin-conjugating enzyme]-L-cysteine + N(6)-ubiquitinyl-[acceptor protein]-L-lysine.. It functions in the pathway protein modification; protein ubiquitination. In terms of biological role, acts as an E3 ubiquitin-protein ligase, or as part of E3 complex, which accepts ubiquitin from specific E2 ubiquitin-conjugating enzymes and then transfers it to substrates (in vitro). The protein is Probable E3 ubiquitin-protein ligase LUL3 (LUL3) of Arabidopsis thaliana (Mouse-ear cress).